Here is a 98-residue protein sequence, read N- to C-terminus: NADH-ubiquinone oxidoreductase chain 4L (98 aa).

The next 3 membrane-spanning stretches (helical) occupy residues 1–21 (MTST…GILI), 29–49 (ILLC…VWAI), and 61–81 (LILL…MVAL).

It belongs to the complex I subunit 4L family.

It is found in the mitochondrion membrane. The enzyme catalyses a ubiquinone + NADH + 5 H(+)(in) = a ubiquinol + NAD(+) + 4 H(+)(out). Its function is as follows. Core subunit of the mitochondrial membrane respiratory chain NADH dehydrogenase (Complex I) that is believed to belong to the minimal assembly required for catalysis. Complex I functions in the transfer of electrons from NADH to the respiratory chain. The immediate electron acceptor for the enzyme is believed to be ubiquinone. This is NADH-ubiquinone oxidoreductase chain 4L (ND4L) from Patiria pectinifera (Starfish).